Here is a 461-residue protein sequence, read N- to C-terminus: Serine--tRNA ligase (461 aa).

A disordered region spans residues 112 to 134; sequence EVPFGRDENDNREHHTFGEKPRF. Residues 114-134 are compositionally biased toward basic and acidic residues; sequence PFGRDENDNREHHTFGEKPRF. 252 to 254 contributes to the L-serine binding site; the sequence is TAE. ATP is bound at residue 283-285; that stretch reads RAE. Glutamate 306 lines the L-serine pocket. Residue 370-373 participates in ATP binding; that stretch reads EISS. L-serine is bound at residue serine 406.

The protein belongs to the class-II aminoacyl-tRNA synthetase family. Type-1 seryl-tRNA synthetase subfamily. As to quaternary structure, homodimer. The tRNA molecule binds across the dimer.

The protein localises to the cytoplasm. It catalyses the reaction tRNA(Ser) + L-serine + ATP = L-seryl-tRNA(Ser) + AMP + diphosphate + H(+). The catalysed reaction is tRNA(Sec) + L-serine + ATP = L-seryl-tRNA(Sec) + AMP + diphosphate + H(+). It participates in aminoacyl-tRNA biosynthesis; selenocysteinyl-tRNA(Sec) biosynthesis; L-seryl-tRNA(Sec) from L-serine and tRNA(Sec): step 1/1. In terms of biological role, catalyzes the attachment of serine to tRNA(Ser). Is also able to aminoacylate tRNA(Sec) with serine, to form the misacylated tRNA L-seryl-tRNA(Sec), which will be further converted into selenocysteinyl-tRNA(Sec). The chain is Serine--tRNA ligase from Methylocella silvestris (strain DSM 15510 / CIP 108128 / LMG 27833 / NCIMB 13906 / BL2).